We begin with the raw amino-acid sequence, 241 residues long: Sec-independent protein translocase protein TatC (241 aa).

6 helical membrane-spanning segments follow: residues 27-47 (LIIVIAVTLLLMLAIFPFSAG), 76-96 (LTMCFIGAITVGFPLLVYEAF), 122-142 (FVAGGLVAYFVTLPLFFSIVI), 161-181 (IVTNFVAGLGLVFQVPLIIVL), 193-213 (LVKGRLGVYGLLFGVAMFFSP), and 217-237 (LFSQLIVLAVLAILFEVSMVL).

Belongs to the TatC family. As to quaternary structure, forms a complex with TatA.

The protein resides in the cell membrane. Its function is as follows. Part of the twin-arginine translocation (Tat) system that transports large folded proteins containing a characteristic twin-arginine motif in their signal peptide across membranes. This chain is Sec-independent protein translocase protein TatC, found in Methanocella arvoryzae (strain DSM 22066 / NBRC 105507 / MRE50).